The chain runs to 161 residues: MPSFDVISEVDKHELTNAVDQANRELDTRFDFKGVEAKFELEDGKVINQSAPSDFQVKQMTDILRARLLARGIDVRCLEFGDVETNLAGARQKVTVKQGIEQKQAKQLVAKLKEAKLKVEAQINGDKLRVTGKKRDDLQDAIAVLKKADFELPLQFDNFRD.

This sequence belongs to the YajQ family.

In terms of biological role, nucleotide-binding protein. This is Nucleotide-binding protein xcc-b100_3818 from Xanthomonas campestris pv. campestris (strain B100).